The primary structure comprises 153 residues: Deoxyuridine 5'-triphosphate nucleotidohydrolase (153 aa).

Substrate-binding positions include 65–67 (RSG), Asn78, and 82–84 (TID). The tract at residues 132–153 (MTQRGEGGFGHTGISAVHPRTH) is disordered.

It belongs to the dUTPase family. Mg(2+) serves as cofactor.

The catalysed reaction is dUTP + H2O = dUMP + diphosphate + H(+). It functions in the pathway pyrimidine metabolism; dUMP biosynthesis; dUMP from dCTP (dUTP route): step 2/2. In terms of biological role, this enzyme is involved in nucleotide metabolism: it produces dUMP, the immediate precursor of thymidine nucleotides and it decreases the intracellular concentration of dUTP so that uracil cannot be incorporated into DNA. This Chlorobium limicola (strain DSM 245 / NBRC 103803 / 6330) protein is Deoxyuridine 5'-triphosphate nucleotidohydrolase.